A 202-amino-acid chain; its full sequence is Holliday junction branch migration complex subunit RuvA (202 aa).

The segment at 1 to 65 is domain I; sequence MIAYVEGRLA…EDALELYGFA (65 aa). Residues 66–144 form a domain II region; the sequence is TWDERQTFIV…VEDLPAAAPL (79 aa). The tract at residues 145-155 is flexible linker; sequence VTGGAPGGVFR. The segment at 155 to 202 is domain III; it reads RDALAGLANLGYGEEEASHVLKEVLHGEPDLDVGGALRAALRALARGR.

It belongs to the RuvA family. In terms of assembly, homotetramer. Forms an RuvA(8)-RuvB(12)-Holliday junction (HJ) complex. HJ DNA is sandwiched between 2 RuvA tetramers; dsDNA enters through RuvA and exits via RuvB. An RuvB hexamer assembles on each DNA strand where it exits the tetramer. Each RuvB hexamer is contacted by two RuvA subunits (via domain III) on 2 adjacent RuvB subunits; this complex drives branch migration. In the full resolvosome a probable DNA-RuvA(4)-RuvB(12)-RuvC(2) complex forms which resolves the HJ.

It is found in the cytoplasm. Its function is as follows. The RuvA-RuvB-RuvC complex processes Holliday junction (HJ) DNA during genetic recombination and DNA repair, while the RuvA-RuvB complex plays an important role in the rescue of blocked DNA replication forks via replication fork reversal (RFR). RuvA specifically binds to HJ cruciform DNA, conferring on it an open structure. The RuvB hexamer acts as an ATP-dependent pump, pulling dsDNA into and through the RuvAB complex. HJ branch migration allows RuvC to scan DNA until it finds its consensus sequence, where it cleaves and resolves the cruciform DNA. This Nitratidesulfovibrio vulgaris (strain DP4) (Desulfovibrio vulgaris) protein is Holliday junction branch migration complex subunit RuvA.